A 129-amino-acid chain; its full sequence is Holo-[acyl-carrier-protein] synthase (129 aa).

Residues aspartate 8 and glutamate 60 each coordinate Mg(2+).

This sequence belongs to the P-Pant transferase superfamily. AcpS family. Requires Mg(2+) as cofactor.

The protein localises to the cytoplasm. The catalysed reaction is apo-[ACP] + CoA = holo-[ACP] + adenosine 3',5'-bisphosphate + H(+). Transfers the 4'-phosphopantetheine moiety from coenzyme A to a Ser of acyl-carrier-protein. This Anaeromyxobacter sp. (strain Fw109-5) protein is Holo-[acyl-carrier-protein] synthase.